Here is a 453-residue protein sequence, read N- to C-terminus: Zinc finger CCCH domain-containing protein 26 (453 aa).

Polar residues predominate over residues 1–15; that stretch reads MSETQQQVQNSTGSI. The disordered stretch occupies residues 1 to 47; that stretch reads MSETQQQVQNSTGSIRSPDKIEDTFRRMKVNEDNMEQSSPYPDRPGE. Serine 2 is modified (N-acetylserine). A compositionally biased stretch (basic and acidic residues) spans 17–32; the sequence is SPDKIEDTFRRMKVNE. 5 consecutive C3H1-type zinc fingers follow at residues 44–72, 95–112, 129–157, 261–289, and 307–335; these read RPGE…HPLT, ETGA…HPKD, RQGE…HPHP, FSER…HPKE, and RPGQ…HSML. Polar residues predominate over residues 360 to 379; the sequence is STNLRISSPPSPSDMTTLSN. The disordered stretch occupies residues 360-453; sequence STNLRISSPP…KVQDSSDKST (94 aa). Residues 391 to 407 show a composition bias toward basic and acidic residues; it reads ETEKQDDSPTEPEKSEV. Residues 413–422 are compositionally biased toward polar residues; that stretch reads PNGSDSTSLP. The segment covering 441 to 453 has biased composition (basic and acidic residues); the sequence is DSSKVQDSSDKST.

The protein resides in the nucleus. This Arabidopsis thaliana (Mouse-ear cress) protein is Zinc finger CCCH domain-containing protein 26 (ZFN2).